A 425-amino-acid chain; its full sequence is Serine--tRNA ligase (425 aa).

Residue 233–235 (TAE) participates in L-serine binding. Residues 264–266 (RRE) and valine 280 contribute to the ATP site. L-serine is bound at residue glutamate 287. Residue 351-354 (EVSS) participates in ATP binding. L-serine is bound at residue serine 387.

This sequence belongs to the class-II aminoacyl-tRNA synthetase family. Type-1 seryl-tRNA synthetase subfamily. As to quaternary structure, homodimer. The tRNA molecule binds across the dimer.

It localises to the cytoplasm. It carries out the reaction tRNA(Ser) + L-serine + ATP = L-seryl-tRNA(Ser) + AMP + diphosphate + H(+). It catalyses the reaction tRNA(Sec) + L-serine + ATP = L-seryl-tRNA(Sec) + AMP + diphosphate + H(+). Its pathway is aminoacyl-tRNA biosynthesis; selenocysteinyl-tRNA(Sec) biosynthesis; L-seryl-tRNA(Sec) from L-serine and tRNA(Sec): step 1/1. In terms of biological role, catalyzes the attachment of serine to tRNA(Ser). Is also able to aminoacylate tRNA(Sec) with serine, to form the misacylated tRNA L-seryl-tRNA(Sec), which will be further converted into selenocysteinyl-tRNA(Sec). This is Serine--tRNA ligase from Gemmatimonas aurantiaca (strain DSM 14586 / JCM 11422 / NBRC 100505 / T-27).